A 38-amino-acid chain; its full sequence is Large ribosomal subunit protein bL36 (38 aa).

It belongs to the bacterial ribosomal protein bL36 family.

The chain is Large ribosomal subunit protein bL36 from Thermotoga maritima (strain ATCC 43589 / DSM 3109 / JCM 10099 / NBRC 100826 / MSB8).